The sequence spans 302 residues: Sulfate adenylyltransferase subunit 2 (302 aa).

Residues 279 to 302 (ERQGRAIDHDSSGSMELKKRQGYF) form a disordered region. Residues 280–302 (RQGRAIDHDSSGSMELKKRQGYF) are compositionally biased toward basic and acidic residues.

Belongs to the PAPS reductase family. CysD subfamily. As to quaternary structure, heterodimer composed of CysD, the smaller subunit, and CysN.

It catalyses the reaction sulfate + ATP + H(+) = adenosine 5'-phosphosulfate + diphosphate. Its pathway is sulfur metabolism; hydrogen sulfide biosynthesis; sulfite from sulfate: step 1/3. Its function is as follows. With CysN forms the ATP sulfurylase (ATPS) that catalyzes the adenylation of sulfate producing adenosine 5'-phosphosulfate (APS) and diphosphate, the first enzymatic step in sulfur assimilation pathway. APS synthesis involves the formation of a high-energy phosphoric-sulfuric acid anhydride bond driven by GTP hydrolysis by CysN coupled to ATP hydrolysis by CysD. This Aliivibrio fischeri (strain ATCC 700601 / ES114) (Vibrio fischeri) protein is Sulfate adenylyltransferase subunit 2.